We begin with the raw amino-acid sequence, 175 residues long: Large ribosomal subunit protein uL6 (175 aa).

It belongs to the universal ribosomal protein uL6 family. Part of the 50S ribosomal subunit.

In terms of biological role, this protein binds to the 23S rRNA, and is important in its secondary structure. It is located near the subunit interface in the base of the L7/L12 stalk, and near the tRNA binding site of the peptidyltransferase center. The sequence is that of Large ribosomal subunit protein uL6 from Xanthomonas oryzae pv. oryzae (strain MAFF 311018).